Consider the following 106-residue polypeptide: Thiosulfate sulfurtransferase GlpE (106 aa).

The region spanning 17–105 is the Rhodanese domain; the sequence is EQSEAKLVDI…WQRAELPIVR (89 aa). Cysteine 65 (cysteine persulfide intermediate) is an active-site residue.

The protein belongs to the GlpE family.

Its subcellular location is the cytoplasm. It carries out the reaction thiosulfate + hydrogen cyanide = thiocyanate + sulfite + 2 H(+). The catalysed reaction is thiosulfate + [thioredoxin]-dithiol = [thioredoxin]-disulfide + hydrogen sulfide + sulfite + 2 H(+). In terms of biological role, transferase that catalyzes the transfer of sulfur from thiosulfate to thiophilic acceptors such as cyanide or dithiols. May function in a CysM-independent thiosulfate assimilation pathway by catalyzing the conversion of thiosulfate to sulfite, which can then be used for L-cysteine biosynthesis. The sequence is that of Thiosulfate sulfurtransferase GlpE from Vibrio campbellii (strain ATCC BAA-1116).